The primary structure comprises 310 residues: tRNA dimethylallyltransferase (310 aa).

10–17 (GPTAVGKS) is an ATP binding site. 12–17 (TAVGKS) is a binding site for substrate. Interaction with substrate tRNA regions lie at residues 35 to 38 (DSAQ), 159 to 163 (QRIQR), and 274 to 281 (KRQITWLR).

Belongs to the IPP transferase family. As to quaternary structure, monomer. Mg(2+) serves as cofactor.

It carries out the reaction adenosine(37) in tRNA + dimethylallyl diphosphate = N(6)-dimethylallyladenosine(37) in tRNA + diphosphate. Catalyzes the transfer of a dimethylallyl group onto the adenine at position 37 in tRNAs that read codons beginning with uridine, leading to the formation of N6-(dimethylallyl)adenosine (i(6)A). The chain is tRNA dimethylallyltransferase from Halorhodospira halophila (strain DSM 244 / SL1) (Ectothiorhodospira halophila (strain DSM 244 / SL1)).